Consider the following 198-residue polypeptide: Protein GrpE (198 aa).

The span at 1-27 (MEERNEQVVEETKEAQTEEATIEKNSE) shows a compositional bias: basic and acidic residues. The interval 1–39 (MEERNEQVVEETKEAQTEEATIEKNSEESVTEEATEETV) is disordered. The span at 29 to 39 (SVTEEATEETV) shows a compositional bias: acidic residues.

This sequence belongs to the GrpE family. Homodimer.

It localises to the cytoplasm. Its function is as follows. Participates actively in the response to hyperosmotic and heat shock by preventing the aggregation of stress-denatured proteins, in association with DnaK and GrpE. It is the nucleotide exchange factor for DnaK and may function as a thermosensor. Unfolded proteins bind initially to DnaJ; upon interaction with the DnaJ-bound protein, DnaK hydrolyzes its bound ATP, resulting in the formation of a stable complex. GrpE releases ADP from DnaK; ATP binding to DnaK triggers the release of the substrate protein, thus completing the reaction cycle. Several rounds of ATP-dependent interactions between DnaJ, DnaK and GrpE are required for fully efficient folding. The polypeptide is Protein GrpE (Bacillus cytotoxicus (strain DSM 22905 / CIP 110041 / 391-98 / NVH 391-98)).